The primary structure comprises 185 residues: Ribosome-recycling factor (185 aa).

Belongs to the RRF family.

The protein localises to the cytoplasm. Responsible for the release of ribosomes from messenger RNA at the termination of protein biosynthesis. May increase the efficiency of translation by recycling ribosomes from one round of translation to another. The sequence is that of Ribosome-recycling factor from Frankia alni (strain DSM 45986 / CECT 9034 / ACN14a).